A 641-amino-acid polypeptide reads, in one-letter code: 1-deoxy-D-xylulose-5-phosphate synthase (641 aa).

Thiamine diphosphate is bound by residues His71 and 112 to 114 (SHA). Asp144 serves as a coordination point for Mg(2+). Residues 145–146 (GA), Asn173, Tyr284, and Glu365 each bind thiamine diphosphate. A Mg(2+)-binding site is contributed by Asn173.

Belongs to the transketolase family. DXPS subfamily. As to quaternary structure, homodimer. The cofactor is Mg(2+). Thiamine diphosphate is required as a cofactor.

The catalysed reaction is D-glyceraldehyde 3-phosphate + pyruvate + H(+) = 1-deoxy-D-xylulose 5-phosphate + CO2. It functions in the pathway metabolic intermediate biosynthesis; 1-deoxy-D-xylulose 5-phosphate biosynthesis; 1-deoxy-D-xylulose 5-phosphate from D-glyceraldehyde 3-phosphate and pyruvate: step 1/1. In terms of biological role, catalyzes the acyloin condensation reaction between C atoms 2 and 3 of pyruvate and glyceraldehyde 3-phosphate to yield 1-deoxy-D-xylulose-5-phosphate (DXP). This Mycolicibacterium paratuberculosis (strain ATCC BAA-968 / K-10) (Mycobacterium paratuberculosis) protein is 1-deoxy-D-xylulose-5-phosphate synthase.